A 659-amino-acid chain; its full sequence is Beta-galactosidase BgaA (659 aa).

R103 provides a ligand contact to substrate. C107 serves as a coordination point for Zn(2+). Substrate is bound at residue N141. E142 functions as the Proton donor in the catalytic mechanism. Positions 148, 150, and 153 each coordinate Zn(2+). The active-site Nucleophile is the E298. W307 contributes to the substrate binding site.

The protein belongs to the glycosyl hydrolase 42 family. In terms of assembly, dimer.

The enzyme catalyses Hydrolysis of terminal non-reducing beta-D-galactose residues in beta-D-galactosides.. With respect to regulation, inhibited by Cu(2+), Hg(2+) and Zn(2+). No effect with Ca(2+), Mg(2+), Mn(2+) or excess EDTA (10 mM). Its function is as follows. Involved in plant cell wall degradation in cooperation with cellulosome. Hydrolyzes both p-nitrophenyl-alpha-L-arabinopyranoside (pNPAp) and p-nitrophenyl-beta-D-galactopyranoside (pNPGp), with higher activity for pNPAp. Shows hydrolysis activity against p-nitrophenyl-beta-D-fucopyranoside (pNPFp), but not against p-nitrophenyl-alpha-L-arabinofuranoside (pNPAf), o-nitrophenyl-beta-D-galactopyranoside (oNPGp), p-nitrophenyl-beta-D-xylopyranoside (pNPXp), p-nitrophenyl-beta-D-glucopyranoside (pNPGLp), p-nitrophenyl-beta-D-cellobiopyranoside (pNPCp), p-nitrophenyl-beta-lactopyranoside (pNPLp) or p-nitrophenyl-alpha-galactopyranoside (pNPalphaGp). No detectable activity against arabinan or arabinoxylan, but activity against arabinogalactan can be detected. Increases degradation activity of alpha-L-arabinofuranosidase (ArfA) and endo-1,4-beta-xylanase (XynA) when corn fiber gum and corn stem powder are used as substrates. The sequence is that of Beta-galactosidase BgaA (bgaA) from Clostridium cellulovorans (strain ATCC 35296 / DSM 3052 / OCM 3 / 743B).